Here is a 476-residue protein sequence, read N- to C-terminus: Aspartyl/glutamyl-tRNA(Asn/Gln) amidotransferase subunit B (476 aa).

Belongs to the GatB/GatE family. GatB subfamily. In terms of assembly, heterotrimer of A, B and C subunits.

The enzyme catalyses L-glutamyl-tRNA(Gln) + L-glutamine + ATP + H2O = L-glutaminyl-tRNA(Gln) + L-glutamate + ADP + phosphate + H(+). It catalyses the reaction L-aspartyl-tRNA(Asn) + L-glutamine + ATP + H2O = L-asparaginyl-tRNA(Asn) + L-glutamate + ADP + phosphate + 2 H(+). Functionally, allows the formation of correctly charged Asn-tRNA(Asn) or Gln-tRNA(Gln) through the transamidation of misacylated Asp-tRNA(Asn) or Glu-tRNA(Gln) in organisms which lack either or both of asparaginyl-tRNA or glutaminyl-tRNA synthetases. The reaction takes place in the presence of glutamine and ATP through an activated phospho-Asp-tRNA(Asn) or phospho-Glu-tRNA(Gln). In Neisseria meningitidis serogroup B (strain ATCC BAA-335 / MC58), this protein is Aspartyl/glutamyl-tRNA(Asn/Gln) amidotransferase subunit B.